Reading from the N-terminus, the 570-residue chain is Protein B602L (570 aa).

20 tandem repeats follow at residues 161–164 (CADT), 165–168 (NAST), 169–172 (SADT), 173–176 (NAST), 177–180 (CADT), 181–184 (NVDT), 185–188 (CAST), 189–192 (CADT), 193–196 (NVDT), 197–200 (CADT), 201–204 (CAST), 205–208 (CAST), 209–212 (CAST), 213–216 (CAST), 217–220 (CADT), 221–224 (NVDT), 225–228 (CADT), 229–232 (CVST), 233–236 (CAST), and 237–240 (CANT). Positions 161–240 (CADTNASTSA…STCASTCANT (80 aa)) are 20 X 4 AA tandem repeats of [CNS]-[ATV]-[DNS]-T.

This sequence belongs to the asfivirus B602L family.

It localises to the host cytoplasm. Functionally, plays an essential role in the assembly of the icosahedral capsid of the virus. Allows the assembly of 3 molecules of hexon protein p72 and formation of a thermostable trimer. In African swine fever virus (isolate Tick/South Africa/Pretoriuskop Pr4/1996) (ASFV), this protein is Protein B602L.